A 116-amino-acid chain; its full sequence is MSRFKKIKGDEGESIASDFLISIGHEILKRNYRFLYCEIDIISIKEEVLYFSEVKFWKEFESFDPRFTFNFAKQTRMRKAASGFLSENLSLQNHFVSFCLVSINEKKGCEYYPDLF.

The protein belongs to the UPF0102 family.

The sequence is that of UPF0102 protein LBJ_1427 from Leptospira borgpetersenii serovar Hardjo-bovis (strain JB197).